The chain runs to 708 residues: Ion-translocating oxidoreductase complex subunit C (708 aa).

2 4Fe-4S ferredoxin-type domains span residues 369–397 (GEPQ…QQLY) and 407–436 (KATT…VQYF). Residues Cys377, Cys380, Cys383, Cys387, Cys416, Cys419, Cys422, and Cys426 each contribute to the [4Fe-4S] cluster site. A disordered region spans residues 599–686 (KARKLEQQQS…EEQVDPRKAA (88 aa)).

It belongs to the 4Fe4S bacterial-type ferredoxin family. RnfC subfamily. As to quaternary structure, the complex is composed of six subunits: RsxA, RsxB, RsxC, RsxD, RsxE and RsxG. [4Fe-4S] cluster is required as a cofactor.

The protein localises to the cell inner membrane. Its function is as follows. Part of a membrane-bound complex that couples electron transfer with translocation of ions across the membrane. Required to maintain the reduced state of SoxR. This is Ion-translocating oxidoreductase complex subunit C from Escherichia coli (strain 55989 / EAEC).